Reading from the N-terminus, the 328-residue chain is 4-hydroxy-3-methylbut-2-enyl diphosphate reductase (328 aa).

C13 provides a ligand contact to [4Fe-4S] cluster. H41 and H75 together coordinate (2E)-4-hydroxy-3-methylbut-2-enyl diphosphate. Dimethylallyl diphosphate-binding residues include H41 and H75. Positions 41 and 75 each coordinate isopentenyl diphosphate. C97 lines the [4Fe-4S] cluster pocket. A (2E)-4-hydroxy-3-methylbut-2-enyl diphosphate-binding site is contributed by H125. H125 is a dimethylallyl diphosphate binding site. H125 is an isopentenyl diphosphate binding site. The active-site Proton donor is the E127. (2E)-4-hydroxy-3-methylbut-2-enyl diphosphate is bound at residue T168. A [4Fe-4S] cluster-binding site is contributed by C229. Residues S257, S258, N259, and S306 each coordinate (2E)-4-hydroxy-3-methylbut-2-enyl diphosphate. Dimethylallyl diphosphate contacts are provided by S257, S258, N259, and S306. The isopentenyl diphosphate site is built by S257, S258, N259, and S306.

The protein belongs to the IspH family. Requires [4Fe-4S] cluster as cofactor.

It catalyses the reaction isopentenyl diphosphate + 2 oxidized [2Fe-2S]-[ferredoxin] + H2O = (2E)-4-hydroxy-3-methylbut-2-enyl diphosphate + 2 reduced [2Fe-2S]-[ferredoxin] + 2 H(+). The catalysed reaction is dimethylallyl diphosphate + 2 oxidized [2Fe-2S]-[ferredoxin] + H2O = (2E)-4-hydroxy-3-methylbut-2-enyl diphosphate + 2 reduced [2Fe-2S]-[ferredoxin] + 2 H(+). It functions in the pathway isoprenoid biosynthesis; dimethylallyl diphosphate biosynthesis; dimethylallyl diphosphate from (2E)-4-hydroxy-3-methylbutenyl diphosphate: step 1/1. The protein operates within isoprenoid biosynthesis; isopentenyl diphosphate biosynthesis via DXP pathway; isopentenyl diphosphate from 1-deoxy-D-xylulose 5-phosphate: step 6/6. Catalyzes the conversion of 1-hydroxy-2-methyl-2-(E)-butenyl 4-diphosphate (HMBPP) into a mixture of isopentenyl diphosphate (IPP) and dimethylallyl diphosphate (DMAPP). Acts in the terminal step of the DOXP/MEP pathway for isoprenoid precursor biosynthesis. In Chlorobium phaeobacteroides (strain DSM 266 / SMG 266 / 2430), this protein is 4-hydroxy-3-methylbut-2-enyl diphosphate reductase.